Here is a 319-residue protein sequence, read N- to C-terminus: ATP-dependent 6-phosphofructokinase (319 aa).

G11 provides a ligand contact to ATP. 21-25 (RAVVR) lines the ADP pocket. ATP-binding positions include 72 to 73 (RY) and 102 to 105 (GDGS). D103 contributes to the Mg(2+) binding site. 125–127 (TID) lines the substrate pocket. D127 serves as the catalytic Proton acceptor. R154 provides a ligand contact to ADP. Residues R162 and 169-171 (MGR) contribute to the substrate site. Residues 185–187 (GAE), R211, and 213–215 (KKH) each bind ADP. Substrate-binding positions include E222, R243, and 249 to 252 (HVQR).

Belongs to the phosphofructokinase type A (PFKA) family. ATP-dependent PFK group I subfamily. Prokaryotic clade 'B1' sub-subfamily. In terms of assembly, homotetramer. It depends on Mg(2+) as a cofactor.

It localises to the cytoplasm. It carries out the reaction beta-D-fructose 6-phosphate + ATP = beta-D-fructose 1,6-bisphosphate + ADP + H(+). It participates in carbohydrate degradation; glycolysis; D-glyceraldehyde 3-phosphate and glycerone phosphate from D-glucose: step 3/4. Its activity is regulated as follows. Allosterically activated by ADP and other diphosphonucleosides, and allosterically inhibited by phosphoenolpyruvate. Catalyzes the phosphorylation of D-fructose 6-phosphate to fructose 1,6-bisphosphate by ATP, the first committing step of glycolysis. This chain is ATP-dependent 6-phosphofructokinase, found in Listeria innocua serovar 6a (strain ATCC BAA-680 / CLIP 11262).